A 410-amino-acid chain; its full sequence is Peptidase T (410 aa).

A Zn(2+)-binding site is contributed by His-78. Residue Asp-80 is part of the active site. Residue Asp-140 coordinates Zn(2+). The Proton acceptor role is filled by Glu-174. Zn(2+) is bound by residues Glu-175, Asp-197, and His-379.

The protein belongs to the peptidase M20B family. Zn(2+) serves as cofactor.

The protein resides in the cytoplasm. The catalysed reaction is Release of the N-terminal residue from a tripeptide.. Functionally, cleaves the N-terminal amino acid of tripeptides. The polypeptide is Peptidase T (Vibrio cholerae serotype O1 (strain ATCC 39315 / El Tor Inaba N16961)).